The sequence spans 36 residues: Photosystem I reaction center subunit VIII (36 aa).

Residues 7–29 form a helical membrane-spanning segment; that stretch reads PSIFVPLVGLVFPAITMASLFIY.

The protein belongs to the PsaI family.

Its subcellular location is the plastid. The protein localises to the chloroplast thylakoid membrane. Functionally, may help in the organization of the PsaL subunit. The chain is Photosystem I reaction center subunit VIII from Psilotum nudum (Whisk fern).